Here is a 350-residue protein sequence, read N- to C-terminus: Protein RecA (350 aa).

Residue 68-75 (GPESSGKT) coordinates ATP.

It belongs to the RecA family.

Its subcellular location is the cytoplasm. Functionally, can catalyze the hydrolysis of ATP in the presence of single-stranded DNA, the ATP-dependent uptake of single-stranded DNA by duplex DNA, and the ATP-dependent hybridization of homologous single-stranded DNAs. It interacts with LexA causing its activation and leading to its autocatalytic cleavage. In Symbiobacterium thermophilum (strain DSM 24528 / JCM 14929 / IAM 14863 / T), this protein is Protein RecA.